Here is a 530-residue protein sequence, read N- to C-terminus: Equilibrative nucleoside transporter 4 (530 aa).

The interval 1–21 is disordered; the sequence is MGSVGSQRLEEPSVAGTPDPG. Over 1–68 the chain is Extracellular; sequence MGSVGSQRLE…DEPVPDDRYH (68 aa). The chain crosses the membrane as a helical span at residues 69 to 89; the sequence is AIYFAMLLAGVGFLLPYNSFI. The Cytoplasmic segment spans residues 90–101; the sequence is TDVDYLHHKYPG. Residues 102-122 traverse the membrane as a helical segment; that stretch reads TSIVFDMSLTYILVALAAVLL. Residues 123–139 are Extracellular-facing; sequence NNVLVERLTLHTRITAG. The chain crosses the membrane as a helical span at residues 140 to 160; sequence YLLALGPLLFISICDVWLQLF. Residues 161 to 166 are Cytoplasmic-facing; it reads SRDQAY. A helical transmembrane segment spans residues 167–187; that stretch reads AINLAAVGTVAFGCTVQQSSF. Over 188 to 231 the chain is Extracellular; the sequence is YGYTGMLPKRYTQGVMTGESTAGVMISLSRILTKLLLPDERAST. A helical transmembrane segment spans residues 232-252; sequence LIFFLVSVALELLCFLLHLLV. Residues 253 to 351 lie on the Cytoplasmic side of the membrane; sequence RRSRFVLFYT…LLLHRYVVAR (99 aa). Residues 352–372 form a helical membrane-spanning segment; that stretch reads VIWADMLSIAVTYFITLCLFP. Residues 373 to 381 lie on the Extracellular side of the membrane; it reads GLESEIRHC. Residues 382–402 form a helical membrane-spanning segment; that stretch reads ILGEWLPILIMAVFNLSDFVG. Residues 403–416 are Cytoplasmic-facing; the sequence is KILAALPVDWRGTH. Residues 417–437 traverse the membrane as a helical segment; sequence LLACSCLRVVFIPLFILCVYP. The Extracellular portion of the chain corresponds to 438-450; it reads SGMPALRHPAWPC. A helical transmembrane segment spans residues 451–471; that stretch reads IFSLLMGISNGYFGSVPMILA. Topologically, residues 472-486 are cytoplasmic; the sequence is AGKVSPKQRELAGNT. A helical membrane pass occupies residues 487 to 509; sequence MTVSYMSGLTLGSAVAYCTYSLT. The Extracellular segment spans residues 510-530; sequence RDAHGSCLHASTANGSILAGL. N-linked (GlcNAc...) asparagine glycosylation is present at Asn-523.

This sequence belongs to the SLC29A/ENT transporter (TC 2.A.57) family. In terms of processing, N-glycosylated. As to expression, mainly expressed in brain and skeletal muscle. In brain, expressed in cerebellum, cerebral cortex, medulla oblongata, occipital pole, frontal and temporal lobes putamen, spinal cord, substancia nigra, hippocampus, caudate nucleus, nucleus accumbens, pons and choroid plexus. Expressed in heart, in both cardiomyocytes and vascular endothelial cells. Also expressed in adrenal gland, small intestine, pancreas, kidney, liver, bone marrow, lymph node. Located in endometrial stroma, where the expression is high in the proliferative phase, decreases during the secretory phase, and is no longer detectable in the menstrual phase.

The protein resides in the cell membrane. It localises to the apical cell membrane. The enzyme catalyses serotonin(out) = serotonin(in). It carries out the reaction dopamine(out) = dopamine(in). It catalyses the reaction (R)-noradrenaline(out) = (R)-noradrenaline(in). The catalysed reaction is (R)-adrenaline(out) = (R)-adrenaline(in). The enzyme catalyses histamine(out) = histamine(in). It carries out the reaction tyramine(in) = tyramine(out). It catalyses the reaction guanidine(out) = guanidine(in). The catalysed reaction is adenosine(in) = adenosine(out). With respect to regulation, activated at acidic pH. Its function is as follows. Electrogenic voltage-dependent transporter that mediates the transport of a variety of endogenous bioactive amines, cationic xenobiotics and drugs. Utilizes the physiologic inside-negative membrane potential as a driving force to facilitate cellular uptake of organic cations. Functions as a Na(+)- and Cl(-)-independent bidirectional transporter. Substrate transport is pH-dependent and enhanced under acidic condition, which is most likely the result of allosteric changes in the transporter structure. Implicated in monoamine neurotransmitters uptake such as serotonin, dopamine, adrenaline/epinephrine, noradrenaline/norepinephrine, histamine and tyramine, thereby supporting a role in homeostatic regulation of aminergic neurotransmission in the central nervous system. Also responsible for the uptake of bioactive amines and drugs through the blood-cerebrospinal fluid (CSF) barrier, from the CSF into choroid plexus epithelial cells, thereby playing a significant role in the clearance of cationic neurotoxins, xenobiotics and metabolic waste in the brain. Involved in bidirectional transport of the purine nucleoside adenosine and plays a role in the regulation of extracellular adenosine concentrations in cardiac tissues, in particular during ischemia. May be involved in organic cation uptake from the tubular lumen into renal tubular cells, thereby contributing to organic cation reabsorption in the kidney. Also transports guanidine. This Homo sapiens (Human) protein is Equilibrative nucleoside transporter 4.